The primary structure comprises 456 residues: Anthranilate synthase component 1 (456 aa).

L-tryptophan contacts are provided by residues Ser-31 and 244-246; that span reads SYM. Residue 279-280 participates in chorismate binding; sequence GT. Mg(2+) is bound at residue Glu-306. Chorismate is bound by residues Tyr-394, Arg-414, 428–430, and Gly-430; that span reads GAG. A Mg(2+)-binding site is contributed by Glu-443.

It belongs to the anthranilate synthase component I family. Heterotetramer consisting of two non-identical subunits: a beta subunit (TrpG) and a large alpha subunit (TrpE). Mg(2+) is required as a cofactor.

The enzyme catalyses chorismate + L-glutamine = anthranilate + pyruvate + L-glutamate + H(+). It functions in the pathway amino-acid biosynthesis; L-tryptophan biosynthesis; L-tryptophan from chorismate: step 1/5. With respect to regulation, feedback inhibited by tryptophan. In terms of biological role, part of a heterotetrameric complex that catalyzes the two-step biosynthesis of anthranilate, an intermediate in the biosynthesis of L-tryptophan. In the first step, the glutamine-binding beta subunit (TrpG) of anthranilate synthase (AS) provides the glutamine amidotransferase activity which generates ammonia as a substrate that, along with chorismate, is used in the second step, catalyzed by the large alpha subunit of AS (TrpE) to produce anthranilate. In the absence of TrpG, TrpE can synthesize anthranilate directly from chorismate and high concentrations of ammonia. The sequence is that of Anthranilate synthase component 1 (trpE) from Lactococcus lactis subsp. lactis (strain IL1403) (Streptococcus lactis).